The chain runs to 270 residues: Centriole, cilia and spindle-associated protein (270 aa).

Position 1 is an N-acetylmethionine (Met-1). The ST]-E-Y-X(3)-Y motif 1; required for efficient microtubule binding and stabilization motif lies at 9–15 (SEYMKRY). 2 disordered regions span residues 50 to 201 (DDWG…SQKT) and 231 to 255 (LVAQ…SSSE). Low complexity predominate over residues 53–67 (GPAGSSEDSASSESS). Pro residues predominate over residues 75-86 (RCAPPSPPPPVE). The segment covering 92–101 (EAERRARGAP) has biased composition (basic and acidic residues). Positions 102 to 118 (EEQDAEAGDAEAEDAED) are enriched in acidic residues. A compositionally biased stretch (basic and acidic residues) spans 127 to 144 (KDVEDKPEQQTRTRETDK). The segment covering 145–156 (SPTSTEPRQQPS) has biased composition (polar residues). The ST]-E-Y-X(3)-Y motif 2; required for efficient microtubule binding and stabilization signature appears at 260–266 (TEYMRCY).

The protein belongs to the CCSAP family. In terms of assembly, associates with microtubules; the association occurs on polyglutamylated tubulin.

It is found in the cytoplasm. The protein localises to the cytoskeleton. Its subcellular location is the microtubule organizing center. It localises to the centrosome. The protein resides in the centriole. It is found in the spindle. The protein localises to the cilium basal body. Its subcellular location is the cilium axoneme. It localises to the cell projection. The protein resides in the axon. It is found in the cilium. In terms of biological role, plays a role in microtubule (MT) stabilization and this stabilization involves the maintenance of NUMA1 at the spindle poles. Colocalizes with polyglutamylated MTs to promote MT stabilization and regulate bipolar spindle formation in mitosis. Binding of CCSAP to centrosomes and the spindle around centrosomes during mitosis inhibits MT depolymerization, thereby stabilizing the mitotic spindle. May play a role in embryonic development. May be required for proper cilia beating. In Homo sapiens (Human), this protein is Centriole, cilia and spindle-associated protein (CCSAP).